The sequence spans 383 residues: 1-deoxy-D-xylulose 5-phosphate reductoisomerase (383 aa).

Residues T10, G11, S12, I13, and N123 each contribute to the NADPH site. K124 contributes to the 1-deoxy-D-xylulose 5-phosphate binding site. E125 serves as a coordination point for NADPH. D149 lines the Mn(2+) pocket. S150, E151, S175, and H198 together coordinate 1-deoxy-D-xylulose 5-phosphate. Residue E151 participates in Mn(2+) binding. Position 204 (G204) interacts with NADPH. Residues S211, N216, K217, and E220 each contribute to the 1-deoxy-D-xylulose 5-phosphate site. A Mn(2+)-binding site is contributed by E220.

It belongs to the DXR family. Requires Mg(2+) as cofactor. The cofactor is Mn(2+).

It catalyses the reaction 2-C-methyl-D-erythritol 4-phosphate + NADP(+) = 1-deoxy-D-xylulose 5-phosphate + NADPH + H(+). The protein operates within isoprenoid biosynthesis; isopentenyl diphosphate biosynthesis via DXP pathway; isopentenyl diphosphate from 1-deoxy-D-xylulose 5-phosphate: step 1/6. Its function is as follows. Catalyzes the NADPH-dependent rearrangement and reduction of 1-deoxy-D-xylulose-5-phosphate (DXP) to 2-C-methyl-D-erythritol 4-phosphate (MEP). This chain is 1-deoxy-D-xylulose 5-phosphate reductoisomerase, found in Desulfosudis oleivorans (strain DSM 6200 / JCM 39069 / Hxd3) (Desulfococcus oleovorans).